Here is an 815-residue protein sequence, read N- to C-terminus: Probable beta-glucosidase G (815 aa).

The N-terminal stretch at 1–20 is a signal peptide; that stretch reads MASIAHLVVSGLLAATAVNG. N-linked (GlcNAc...) asparagine glycosylation is found at Asn40, Asn58, Asn229, and Asn276. Asp304 is an active-site residue. N-linked (GlcNAc...) asparagine glycans are attached at residues Asn343, Asn350, Asn402, Asn507, Asn563, Asn584, Asn623, Asn662, and Asn715.

The protein belongs to the glycosyl hydrolase 3 family.

The protein localises to the secreted. It carries out the reaction Hydrolysis of terminal, non-reducing beta-D-glucosyl residues with release of beta-D-glucose.. It participates in glycan metabolism; cellulose degradation. Beta-glucosidases are one of a number of cellulolytic enzymes involved in the degradation of cellulosic biomass. Catalyzes the last step releasing glucose from the inhibitory cellobiose. The sequence is that of Probable beta-glucosidase G (bglG) from Aspergillus flavus (strain ATCC 200026 / FGSC A1120 / IAM 13836 / NRRL 3357 / JCM 12722 / SRRC 167).